We begin with the raw amino-acid sequence, 54 residues long: Ribulose bisphosphate carboxylase large chain (54 aa).

The propeptide occupies 1 to 2 (MS). Residue proline 3 is modified to N-acetylproline. Position 14 is an N6,N6,N6-trimethyllysine (lysine 14).

Belongs to the RuBisCO large chain family. Type I subfamily. In terms of assembly, heterohexadecamer of 8 large chains and 8 small chains.

The protein localises to the plastid. It localises to the chloroplast. The enzyme catalyses 2 (2R)-3-phosphoglycerate + 2 H(+) = D-ribulose 1,5-bisphosphate + CO2 + H2O. It catalyses the reaction D-ribulose 1,5-bisphosphate + O2 = 2-phosphoglycolate + (2R)-3-phosphoglycerate + 2 H(+). In terms of biological role, ruBisCO catalyzes two reactions: the carboxylation of D-ribulose 1,5-bisphosphate, the primary event in carbon dioxide fixation, as well as the oxidative fragmentation of the pentose substrate in the photorespiration process. Both reactions occur simultaneously and in competition at the same active site. In Ilex ciliospinosa (Sichuan holly), this protein is Ribulose bisphosphate carboxylase large chain (rbcL).